We begin with the raw amino-acid sequence, 606 residues long: Serine/threonine-protein kinase A-Raf (606 aa).

The RBD domain maps to 19–91 (GTVKVYLPNK…DGEELIVEVL (73 aa)). The segment at 98 to 144 (MHNFVRKTFFSLAFCDFCLKFLFHGFRCQTCGYKFHQHCSSKVPTVC) adopts a Phorbol-ester/DAG-type zinc-finger fold. Residues histidine 99, cysteine 112, cysteine 115, cysteine 125, cysteine 128, histidine 133, cysteine 136, and cysteine 144 each coordinate Zn(2+). Serine 157 and serine 162 each carry phosphoserine. Disordered regions lie at residues 158-207 (VQDL…NAPL) and 241-290 (TDAA…DKKK). Position 181 is a phosphothreonine (threonine 181). Phosphoserine occurs at positions 186, 257, and 269. Residues 254–267 (PRGSPSPASVSSGR) show a composition bias toward low complexity. Residues 274–289 (SPSEQRERKSLADDKK) are compositionally biased toward basic and acidic residues. The region spanning 310-570 (VQLLKRIGTG…PQILATIELL (261 aa)) is the Protein kinase domain. ATP-binding positions include 316 to 324 (IGTGSFGTV) and lysine 336. Phosphothreonine is present on threonine 318. The active-site Proton acceptor is aspartate 429.

The protein belongs to the protein kinase superfamily. TKL Ser/Thr protein kinase family. RAF subfamily. In terms of assembly, interacts with TH1L/NELFD. The cofactor is Zn(2+). Dephosphorylation by the SHOC2-MRAS-PP1c (SMP) complex consisting of SHOC2, GTP-bound M-Ras/MRAS and the catalytic subunit of protein phosphatase 1 (PPP1CA, PPP1CB or PPP1CC); this relieves inactivation and stimulates kinase activity.

The enzyme catalyses L-seryl-[protein] + ATP = O-phospho-L-seryl-[protein] + ADP + H(+). It carries out the reaction L-threonyl-[protein] + ATP = O-phospho-L-threonyl-[protein] + ADP + H(+). In terms of biological role, involved in the transduction of mitogenic signals from the cell membrane to the nucleus. May also regulate the TOR signaling cascade. Phosphorylates PFKFB2. This chain is Serine/threonine-protein kinase A-Raf (ARAF), found in Sus scrofa (Pig).